The following is a 101-amino-acid chain: NAD(P)H-quinone oxidoreductase subunit 4L, chloroplastic (101 aa).

3 helical membrane passes run methionine 2–isoleucine 22, methionine 32–phenylalanine 52, and isoleucine 61–valine 81.

The protein belongs to the complex I subunit 4L family. In terms of assembly, NDH is composed of at least 16 different subunits, 5 of which are encoded in the nucleus.

It is found in the plastid. The protein localises to the chloroplast thylakoid membrane. The enzyme catalyses a plastoquinone + NADH + (n+1) H(+)(in) = a plastoquinol + NAD(+) + n H(+)(out). It carries out the reaction a plastoquinone + NADPH + (n+1) H(+)(in) = a plastoquinol + NADP(+) + n H(+)(out). In terms of biological role, NDH shuttles electrons from NAD(P)H:plastoquinone, via FMN and iron-sulfur (Fe-S) centers, to quinones in the photosynthetic chain and possibly in a chloroplast respiratory chain. The immediate electron acceptor for the enzyme in this species is believed to be plastoquinone. Couples the redox reaction to proton translocation, and thus conserves the redox energy in a proton gradient. The sequence is that of NAD(P)H-quinone oxidoreductase subunit 4L, chloroplastic from Ipomoea purpurea (Common morning glory).